The chain runs to 150 residues: MMNKGGGSGGGSGPTAAAAAAALQKQKALLQRVDTDITSVVDNFNQIVNVARVSDPPMKNSQEAYMMEMRASRLVQAADSLLKLVSELKQTAIFSGFASLNDHVEQRIAEFDQEAEKTNRLLARIADDASASLKELESHYYSSAQRSTLD.

A coiled-coil region spans residues 99–127; it reads SLNDHVEQRIAEFDQEAEKTNRLLARIAD.

It belongs to the Mediator complex subunit 22 family. Component of the Mediator complex.

The protein localises to the nucleus. Functionally, component of the Mediator complex, a coactivator involved in the regulated transcription of nearly all RNA polymerase II-dependent genes. Mediator functions as a bridge to convey information from gene-specific regulatory proteins to the basal RNA polymerase II transcription machinery. The Mediator complex, having a compact conformation in its free form, is recruited to promoters by direct interactions with regulatory proteins and serves for the assembly of a functional preinitiation complex with RNA polymerase II and the general transcription factors. The polypeptide is Mediator of RNA polymerase II transcription subunit 22a (MED22A) (Arabidopsis thaliana (Mouse-ear cress)).